The primary structure comprises 137 residues: Ubiquitin-conjugating enzyme variant MMS2 (137 aa).

The UBC core domain occupies 5-137 (PRNFRLLEEL…LRQPKEGETF (133 aa)). Phosphoserine is present on Ser-71.

This sequence belongs to the ubiquitin-conjugating enzyme family. In terms of assembly, heterodimer with UBC13.

In terms of biological role, has a role in the DNA error-free postreplication repair (PRR) pathway. Lacks catalytic activity by itself. The UBC13/MMS2 heterodimer catalyzes the synthesis of non-canonical poly-ubiquitin chains that are linked through 'Lys-63'. The sequence is that of Ubiquitin-conjugating enzyme variant MMS2 (MMS2) from Saccharomyces cerevisiae (strain ATCC 204508 / S288c) (Baker's yeast).